The chain runs to 128 residues: Cytochrome c-type biogenesis protein CcmE (128 aa).

Residues 1–8 (MQKRVRNR) lie on the Cytoplasmic side of the membrane. The helical; Signal-anchor for type II membrane protein transmembrane segment at 9–29 (LITIIICFCSACLGISIILYN) threads the bilayer. Topologically, residues 30–128 (LEKNIVFFLP…KHDENYRPPQ (99 aa)) are periplasmic. Residues histidine 120 and tyrosine 124 each coordinate heme.

The protein belongs to the CcmE/CycJ family.

The protein localises to the cell inner membrane. Its function is as follows. Heme chaperone required for the biogenesis of c-type cytochromes. Transiently binds heme delivered by CcmC and transfers the heme to apo-cytochromes in a process facilitated by CcmF and CcmH. The polypeptide is Cytochrome c-type biogenesis protein CcmE (Rickettsia conorii (strain ATCC VR-613 / Malish 7)).